Reading from the N-terminus, the 833-residue chain is Ventricular zone-expressed PH domain-containing protein homolog 1 (833 aa).

Positions 201 to 319 (TELLALMSQL…TYLVSQLANM (119 aa)) are interaction with TGFBR1. Residues 458–505 (KGVGSDDGEDENRGDIPASISLSEIDPLGQGNDKLPFKTDTERSQLGE) form a disordered region. Residues 492–502 (LPFKTDTERSQ) show a composition bias toward basic and acidic residues. Positions 663 to 833 (ESTFPQQKDL…RESREVTTYL (171 aa)) are interaction with TGFBR1. The PH domain occupies 716 to 819 (QPLIEGKLKE…WLQCINVAVA (104 aa)).

It belongs to the MELT/VEPH family. In terms of assembly, interacts with TGFBR1.

It is found in the cell membrane. Its function is as follows. Interacts with TGF-beta receptor type-1 (TGFBR1) and inhibits dissociation of activated SMAD2 from TGFBR1, impeding its nuclear accumulation and resulting in impaired TGF-beta signaling. May also affect FOXO, Hippo and Wnt signaling. The chain is Ventricular zone-expressed PH domain-containing protein homolog 1 (VEPH1) from Homo sapiens (Human).